Consider the following 395-residue polypeptide: Succinyl-diaminopimelate desuccinylase (395 aa).

Histidine 74 lines the Zn(2+) pocket. Residue aspartate 76 is part of the active site. Residue aspartate 107 participates in Zn(2+) binding. The active-site Proton acceptor is glutamate 141. Residues glutamate 142, glutamate 170, and histidine 368 each coordinate Zn(2+).

It belongs to the peptidase M20A family. DapE subfamily. As to quaternary structure, homodimer. Zn(2+) serves as cofactor. It depends on Co(2+) as a cofactor.

It carries out the reaction N-succinyl-(2S,6S)-2,6-diaminopimelate + H2O = (2S,6S)-2,6-diaminopimelate + succinate. It functions in the pathway amino-acid biosynthesis; L-lysine biosynthesis via DAP pathway; LL-2,6-diaminopimelate from (S)-tetrahydrodipicolinate (succinylase route): step 3/3. In terms of biological role, catalyzes the hydrolysis of N-succinyl-L,L-diaminopimelic acid (SDAP), forming succinate and LL-2,6-diaminopimelate (DAP), an intermediate involved in the bacterial biosynthesis of lysine and meso-diaminopimelic acid, an essential component of bacterial cell walls. The chain is Succinyl-diaminopimelate desuccinylase from Brucella canis (strain ATCC 23365 / NCTC 10854 / RM-666).